The following is a 349-amino-acid chain: Phosphate acyltransferase (349 aa).

Belongs to the PlsX family. As to quaternary structure, homodimer. Probably interacts with PlsY.

The protein localises to the cytoplasm. The enzyme catalyses a fatty acyl-[ACP] + phosphate = an acyl phosphate + holo-[ACP]. Its pathway is lipid metabolism; phospholipid metabolism. Functionally, catalyzes the reversible formation of acyl-phosphate (acyl-PO(4)) from acyl-[acyl-carrier-protein] (acyl-ACP). This enzyme utilizes acyl-ACP as fatty acyl donor, but not acyl-CoA. This is Phosphate acyltransferase from Rhodospirillum rubrum (strain ATCC 11170 / ATH 1.1.1 / DSM 467 / LMG 4362 / NCIMB 8255 / S1).